Here is a 375-residue protein sequence, read N- to C-terminus: Alcohol dehydrogenase 1 (375 aa).

The residue at position 1 (Ser1) is an N-acetylserine. Zn(2+) is bound by residues Cys46, His67, Cys97, Cys100, Cys103, Cys111, and Cys174. Residues 199–204 (GLGGVG), Asp223, Lys228, 293–295 (VGV), and Arg370 contribute to the NAD(+) site.

This sequence belongs to the zinc-containing alcohol dehydrogenase family. Class-I subfamily. In terms of assembly, homodimer. Requires Zn(2+) as cofactor.

Its subcellular location is the cytoplasm. The catalysed reaction is a primary alcohol + NAD(+) = an aldehyde + NADH + H(+). The enzyme catalyses a secondary alcohol + NAD(+) = a ketone + NADH + H(+). In Naja naja (Indian cobra), this protein is Alcohol dehydrogenase 1.